A 91-amino-acid polypeptide reads, in one-letter code: Elongation factor 1-beta (91 aa).

This sequence belongs to the EF-1-beta/EF-1-delta family.

In terms of biological role, promotes the exchange of GDP for GTP in EF-1-alpha/GDP, thus allowing the regeneration of EF-1-alpha/GTP that could then be used to form the ternary complex EF-1-alpha/GTP/AAtRNA. The sequence is that of Elongation factor 1-beta from Metallosphaera sedula (strain ATCC 51363 / DSM 5348 / JCM 9185 / NBRC 15509 / TH2).